We begin with the raw amino-acid sequence, 199 residues long: Urease accessory protein UreG (199 aa).

Residue 8-15 (GPVGSGKT) coordinates GTP.

The protein belongs to the SIMIBI class G3E GTPase family. UreG subfamily. As to quaternary structure, homodimer. UreH, UreF and UreG form a complex that acts as a GTP-hydrolysis-dependent molecular chaperone, activating the urease apoprotein by helping to assemble the nickel containing metallocenter of UreC. The UreE protein probably delivers the nickel.

The protein resides in the cytoplasm. Facilitates the functional incorporation of the urease nickel metallocenter. This process requires GTP hydrolysis, probably effectuated by UreG. The polypeptide is Urease accessory protein UreG (Helicobacter pylori (strain G27)).